The following is a 120-amino-acid chain: uncharacterized protein (120 aa).

It localises to the mitochondrion. This is an uncharacterized protein from Arabidopsis thaliana (Mouse-ear cress).